The chain runs to 1386 residues: DNA-directed RNA polymerase subunit beta (1386 aa).

It belongs to the RNA polymerase beta chain family. As to quaternary structure, in plastids the minimal PEP RNA polymerase catalytic core is composed of four subunits: alpha, beta, beta', and beta''. When a (nuclear-encoded) sigma factor is associated with the core the holoenzyme is formed, which can initiate transcription.

The protein resides in the plastid. Its subcellular location is the chloroplast. The enzyme catalyses RNA(n) + a ribonucleoside 5'-triphosphate = RNA(n+1) + diphosphate. Functionally, DNA-dependent RNA polymerase catalyzes the transcription of DNA into RNA using the four ribonucleoside triphosphates as substrates. The polypeptide is DNA-directed RNA polymerase subunit beta (Thalassiosira pseudonana (Marine diatom)).